We begin with the raw amino-acid sequence, 90 residues long: Protein LURE 1.5 (90 aa).

The N-terminal stretch at methionine 1–serine 19 is a signal peptide. 2 disulfides stabilise this stretch: cysteine 58-cysteine 75 and cysteine 61-cysteine 82.

Belongs to the DEFL family. As to expression, expressed in the pistil. Detected exclusively in the synergid cells.

It localises to the secreted. Functionally, inactive pollen tube attractants guiding pollen tubes to the ovular micropyle. This chain is Protein LURE 1.5, found in Arabidopsis thaliana (Mouse-ear cress).